The following is a 323-amino-acid chain: GDP-L-fucose synthase 1 (323 aa).

Ala-2 carries the post-translational modification N-acetylalanine. 23 to 29 is an NADP(+) binding site; it reads GHRGLVG. The Proton donor/acceptor role is filled by Tyr-149. Residues Lys-153, 176-179, and His-192 contribute to the NADP(+) site; that span reads PTNL. The substrate site is built by Arg-200, Trp-215, Arg-222, and Asp-282.

The protein belongs to the NAD(P)-dependent epimerase/dehydratase family. Fucose synthase subfamily. Binds and stabilizes MUR1. Homodimer. As to expression, highly expressed in roots and flowers, less abundant in leaves, stems and siliques.

The enzyme catalyses GDP-beta-L-fucose + NADP(+) = GDP-4-dehydro-alpha-D-rhamnose + NADPH + H(+). It participates in nucleotide-sugar biosynthesis; GDP-L-fucose biosynthesis via de novo pathway; GDP-L-fucose from GDP-alpha-D-mannose: step 2/2. Functionally, catalyzes the two-step NADP-dependent conversion of GDP-4-dehydro-6-deoxy-D-mannose to GDP-fucose, involving an epimerase and a reductase reaction. Not involved in the synthesis of GDP-L-galactose from GDP-D-mannose. In Arabidopsis thaliana (Mouse-ear cress), this protein is GDP-L-fucose synthase 1 (GER1).